A 435-amino-acid polypeptide reads, in one-letter code: tRNA-2-methylthio-N(6)-dimethylallyladenosine synthase (435 aa).

The region spanning 1–117 is the MTTase N-terminal domain; sequence MKYFIKTYGC…MPKLLEDVKV (117 aa). [4Fe-4S] cluster-binding residues include Cys-10, Cys-46, Cys-80, Cys-156, Cys-160, and Cys-163. Positions 142-370 constitute a Radical SAM core domain; sequence RDNSYCAYVT…LEIQKAITSK (229 aa). Residues 373–433 form the TRAM domain; sequence QRYKNTVQKV…FQSLDGVVQN (61 aa).

The protein belongs to the methylthiotransferase family. MiaB subfamily. As to quaternary structure, monomer. The cofactor is [4Fe-4S] cluster.

Its subcellular location is the cytoplasm. It catalyses the reaction N(6)-dimethylallyladenosine(37) in tRNA + (sulfur carrier)-SH + AH2 + 2 S-adenosyl-L-methionine = 2-methylsulfanyl-N(6)-dimethylallyladenosine(37) in tRNA + (sulfur carrier)-H + 5'-deoxyadenosine + L-methionine + A + S-adenosyl-L-homocysteine + 2 H(+). Catalyzes the methylthiolation of N6-(dimethylallyl)adenosine (i(6)A), leading to the formation of 2-methylthio-N6-(dimethylallyl)adenosine (ms(2)i(6)A) at position 37 in tRNAs that read codons beginning with uridine. In Hydrogenobaculum sp. (strain Y04AAS1), this protein is tRNA-2-methylthio-N(6)-dimethylallyladenosine synthase.